Reading from the N-terminus, the 288-residue chain is Mycothiol S-conjugate amidase (288 aa).

Positions 12, 15, and 142 each coordinate Zn(2+).

The protein belongs to the MshB deacetylase family. Mca subfamily. As to quaternary structure, monomer. Zn(2+) is required as a cofactor.

The enzyme catalyses mycothiol S-conjugate + H2O = an N-acetyl-L-cysteine-S-conjugate + 1D-myo-inositol 2-amino-2-deoxy-alpha-D-glucopyranoside. With respect to regulation, partially inhibited by MSH when MSmB is used as substrate. Competitively inhibited by the GlcNAc-cyclohexyl derivative 5-(4-chlorophenyl)-N-((2R,3R,4R,5S,6R)-2-(cyclohexylthio)-tetrahydro-4,5-dihydroxy-6-(hydroxymethyl)-2H-pyran-3-yl)furan-2-carboxamide, which also inhibits MshB. A mycothiol (MSH, N-acetyl-cysteinyl-glucosaminyl-inositol) S-conjugate amidase, it recycles conjugated MSH to the N-acetyl cysteine conjugate and the MSH precursor. Involved in MSH-dependent detoxification of a number of alkylating agents and antibiotics. Activity is specific for the mycothiol moiety. Has a low but measurable deacetylation activity on GlcNAc-Ins (N-acetyl-glucosaminyl-inositol), and thus can also directly contribute to the production of MSH. The sequence is that of Mycothiol S-conjugate amidase from Mycobacterium tuberculosis (strain ATCC 25618 / H37Rv).